The chain runs to 207 residues: MEDLLDLGEERRRCPATSGAKMGRRAQQESTQAENHLSGKNSSLTLTAEVPPPKPPRRQGRWAEASVKVSKSQRRASEEIQDHRLRQQSLDRSDDGGDIPVIPDLEEVQEEDFVLQVAAPPSIQVNRVMTYRDLDNDLMKYSAFQTLDGEIDLKLLTKVLAPEHEVREDDVSWDWDHLYTEVSSELLSEWDALQTEKEGPVGQPAHT.

Residue methionine 1 is modified to N-acetylmethionine. A disordered region spans residues 1-97 (MEDLLDLGEE…QSLDRSDDGG (97 aa)). Polar residues predominate over residues 28–46 (QESTQAENHLSGKNSSLTL). Basic and acidic residues predominate over residues 75-95 (RASEEIQDHRLRQQSLDRSDD). Serine 77 carries the phosphoserine modification.

The protein belongs to the IFT43 family. Component of the IFT complex A (IFT-A) complex. IFT-A complex is divided into a core subcomplex composed of IFT122:IFT140:WDR19 which is associated with TULP3 and a peripheral subcomplex composed of IFT43:WDR35:TTC21B. Interacts directy with IFT122, WDR35 and TTC21B.

It is found in the cytoplasm. Its subcellular location is the cytoskeleton. It localises to the cell projection. The protein resides in the cilium. Its function is as follows. As a component of IFT complex A (IFT-A), a complex required for retrograde ciliary transport and entry into cilia of G protein-coupled receptors (GPCRs), it is involved in ciliogenesis. Involved in retrograde ciliary transport along microtubules from the ciliary tip to the base. The polypeptide is Intraflagellar transport protein 43 homolog (IFT43) (Bos taurus (Bovine)).